A 577-amino-acid chain; its full sequence is Arginine--tRNA ligase (577 aa).

A 'HIGH' region motif is present at residues 122-132 (PNVAKEMHVGH).

Belongs to the class-I aminoacyl-tRNA synthetase family. Monomer.

The protein localises to the cytoplasm. The catalysed reaction is tRNA(Arg) + L-arginine + ATP = L-arginyl-tRNA(Arg) + AMP + diphosphate. The polypeptide is Arginine--tRNA ligase (Enterobacter sp. (strain 638)).